A 307-amino-acid chain; its full sequence is Fe-S cluster assembly protein dre2 (307 aa).

Disordered stretches follow at residues 1-26 (MTPV…PSTS) and 159-179 (KKKK…VGFV). A compositionally biased stretch (low complexity) spans 15 to 26 (AAPPTKTAPSTS). Positions 23 to 152 (PSTSTRTLLL…EKPAYQEAAV (130 aa)) are N-terminal SAM-like domain. Positions 153 to 197 (PLRLGGKKKKAPAPTEQPPVATGVGFVDGNDELIDEDDLLSDDDL) are linker. [2Fe-2S] cluster is bound by residues C207, C219, C222, and C224. A fe-S binding site A region spans residues 207–224 (CQPEKAKKRRRPCKDCTC). Residues C270, C273, C281, and C284 each coordinate [4Fe-4S] cluster. Short sequence motifs (cx2C motif) lie at residues 270-273 (CNSC) and 281-284 (CSSC). The segment at 270-284 (CNSCSLGDAFRCSSC) is fe-S binding site B.

The protein belongs to the anamorsin family. As to quaternary structure, monomer. Interacts with tah18. Interacts with mia40. [2Fe-2S] cluster serves as cofactor. The cofactor is [4Fe-4S] cluster.

The protein localises to the cytoplasm. The protein resides in the mitochondrion intermembrane space. In terms of biological role, component of the cytosolic iron-sulfur (Fe-S) protein assembly (CIA) machinery required for the maturation of extramitochondrial Fe-S proteins. Part of an electron transfer chain functioning in an early step of cytosolic Fe-S biogenesis, facilitating the de novo assembly of a [4Fe-4S] cluster on the scaffold complex cfd1-nbp35. Electrons are transferred to dre2 from NADPH via the FAD- and FMN-containing protein tah18. Tah18-dre2 are also required for the assembly of the diferric tyrosyl radical cofactor of ribonucleotide reductase (RNR), probably by providing electrons for reduction during radical cofactor maturation in the catalytic small subunit rnr2. The chain is Fe-S cluster assembly protein dre2 from Aspergillus terreus (strain NIH 2624 / FGSC A1156).